We begin with the raw amino-acid sequence, 1171 residues long: Myosin-B/C (1171 aa).

Residues 105 to 780 (ETVDDIGYLP…AAKELSILQR (676 aa)) form the Myosin motor domain. ATP is bound at residue 199 to 206 (GESGAGKT). Residues 671 to 681 (AHFIRCLKPNE) are actin-binding. Residues 810–1171 (IHFLTRLESN…CFEACAPDRP (362 aa)) are tail.

The protein belongs to the TRAFAC class myosin-kinesin ATPase superfamily. Myosin family.

The protein resides in the cytoplasm. Its function is as follows. Myosins are actin-based motor molecules with ATPase activity. Unconventional myosins serve in intracellular movements. Their highly divergent tails are presumed to bind to membranous compartments, which would be moved relative to actin filaments. Plays a role in proper daughter cell budding and separation. This Toxoplasma gondii protein is Myosin-B/C.